The sequence spans 549 residues: Mitochondrial hydroperoxide bicyclase CYP50918A1 (549 aa).

The tract at residues 1–75 is disordered; that stretch reads MPDAFDVSDD…PQGNRKPAVL (75 aa). The span at 8–26 shows a compositional bias: basic and acidic residues; that stretch reads SDDKQLVDQQLTRDSDSKP. The span at 27 to 41 shows a compositional bias: low complexity; it reads AAKPASKQKPPSKVP. Residue C491 participates in heme binding. Residues 528–549 are disordered; sequence DTGDHGPPNGKFSVIKPRQPKH.

This sequence belongs to the cytochrome P450 family. Heme is required as a cofactor.

It localises to the mitochondrion. The catalysed reaction is (13S)-hydroperoxy-(9Z,11E,15Z)-octadecatrienoate = plasmodiophorol A. It catalyses the reaction (13S)-hydroperoxy-(9Z,11E,15Z)-octadecatrienoate = plasmodiophorol B. It functions in the pathway lipid metabolism; oxylipin biosynthesis. Its function is as follows. Cytochrome P450 hydroperoxide bicyclase involved in the metabolism of oxylipins natural products such as egregiachlorides, hybridalactone, ecklonialactones and related bicyclic oxylipins. Isomerizes the hydroperoxides into epoxyalcohols via epoxyallylic radical. Can use alpha-linolenic 13-hydroperoxide ((9Z,11E,13S,15Z)-13-hydroperoxy-9,11,15-octadecatrienoic, 13-HPOT) as preferred substrate to produce the heterobicyclic oxylipins plasmodiophorol A (6-oxabicyclo[3.1.0]hexane) and plasmodiophorol B (2-oxabicyclo[2.2.1]heptane) at the ratio 12:1 and a minor product plasmodiophorol C (cyclopentanediol) formed through the hydrolysis of plasmodiophorols A and B and, to a lower extent, active with linoleic acid 13-hydroperoxide ((9Z,11E,13S)-13-hydroperoxy-9,11-octadecadienoic, 13-HPOD), linoleic acid 9-hydroperoxide ((9S,10E,12Z)-9-hydroperoxy-10,12-octadecadienoic, 9-HPOD) and alpha-linolenic 9-hydroperoxide ((9S,10E,12Z,15Z)-9-hydroperoxy-10,12,15-octadecatrienoic, 9-HPOT). In Plasmodiophora brassicae (Clubroot disease agent), this protein is Mitochondrial hydroperoxide bicyclase CYP50918A1.